A 485-amino-acid chain; its full sequence is Homeobox protein unplugged (485 aa).

Disordered stretches follow at residues 1–65 (MERP…QEQE), 114–157 (PAGH…DTRF), and 212–325 (GMAQ…RRTA). Positions 54–64 (RDQEQEAEQEQ) are enriched in acidic residues. Residues 114 to 128 (PAGHPAAQQPQAQAQ) are compositionally biased toward low complexity. Polar residues-rich tracts occupy residues 223-234 (QAHSSPAKSGSH) and 254-267 (DSCS…SPRN). The span at 284 to 293 (DSEDCSDDEG) shows a compositional bias: acidic residues. The segment covering 308 to 317 (SQGNGSSSNS) has biased composition (low complexity). The segment at residues 319–378 (SRRRRTAFTSEQLLELEREFHAKKYLSLTERSQIATSLKLSEVQVKIWFQNRRAKWKRVK) is a DNA-binding region (homeobox).

Expressed in the neuroectodermal and mesectodermal cells at the ventral midline of stage 8 embryos, Subsequently, expression domains in the CNS widen and have their most anterior border in the posterior deutocerebrum. Oc/otd and unpg are mutual repressors at the interface of their brain-specific expression domains. Expression fades during germ band retraction and is then restricted to subset of cells by stage 14. Expressed in the founder cells of the cerebral branch within the first tracheal metamere. Outside the CNS, expression is seen in two clusters of ectodermal cells located laterally within the labial and first thoracic segments of stage 9 embryos. By stage 13, the expression is detected in a few cells close to the dorsal midline of the embryos.

It localises to the nucleus. In terms of biological role, plays a regulatory role in neural branching of the tracheae: segment-specific aspects of these neural branching patterns appear to be generated by homeotic regulation of expression. May have a role with oc/otd in the postembryonic development of the brain. The protein is Homeobox protein unplugged of Drosophila melanogaster (Fruit fly).